A 164-amino-acid chain; its full sequence is Nucleotide-binding protein Helmi_22490 (164 aa).

It belongs to the YajQ family.

In terms of biological role, nucleotide-binding protein. This is Nucleotide-binding protein Helmi_22490 from Heliobacterium modesticaldum (strain ATCC 51547 / Ice1).